A 67-amino-acid polypeptide reads, in one-letter code: Beta-defensin 36 (67 aa).

The first 22 residues, 1-22 (MKLLLLTLAALLLVSQLTPGDA), serve as a signal peptide directing secretion. Cystine bridges form between C25–C52, C32–C46, and C36–C53.

It belongs to the beta-defensin family.

Its subcellular location is the secreted. Functionally, has antibacterial activity. The polypeptide is Beta-defensin 36 (Defb36) (Mus musculus (Mouse)).